The sequence spans 721 residues: Mitogen-activated protein kinase 6 (721 aa).

Residue M1 forms a Peptide (Met-Gly) (interchain with G-Cter in ubiquitin) linkage. The 297-residue stretch at 20-316 (YMDLKPLGCG…AEEALSHPYM (297 aa)) folds into the Protein kinase domain. ATP contacts are provided by residues 26 to 34 (LGCGGNGLV) and K49. The Proton acceptor role is filled by D152. S189 bears the Phosphoserine; by PAK1, PAK2 and PAK3 mark. The short motif at 189–191 (SEG) is the SEG motif element. Residues 332–337 (FHIEDE) carry the FRIEDE motif motif. Phosphoserine occurs at positions 386, 452, 556, 558, 665, and 684. The segment covering 701–715 (AMKSSPQIPHQTYSS) has biased composition (polar residues). The interval 701 to 721 (AMKSSPQIPHQTYSSILKHLN) is disordered.

This sequence belongs to the protein kinase superfamily. CMGC Ser/Thr protein kinase family. MAP kinase subfamily. Heterodimer with ERK4/MAPK4. Interacts with (via FRIEDE motif) MAPKAPK5. Interacts with UBE3A; this interaction may be indirect and mediated by HERC2, possibly via HERC2 interaction with NEURL4. Requires Mg(2+) as cofactor. Phosphorylated at Ser-189 by PAK1, PAK2 and PAK3 resulting in catalytic activation. Phosphorylated by MAPKAPK5 at other sites. Post-translationally, ubiquitination at Met-1 leads to degradation by the proteasome pathway.

Its subcellular location is the cytoplasm. It is found in the nucleus. The catalysed reaction is L-seryl-[protein] + ATP = O-phospho-L-seryl-[protein] + ADP + H(+). The enzyme catalyses L-threonyl-[protein] + ATP = O-phospho-L-threonyl-[protein] + ADP + H(+). With respect to regulation, activated by phosphorylation at Ser-189. In terms of biological role, atypical MAPK protein. Phosphorylates microtubule-associated protein 2 (MAP2) and MAPKAPK5. The precise role of the complex formed with MAPKAPK5 is still unclear, but the complex follows a complex set of phosphorylation events: upon interaction with atypical MAPKAPK5, ERK3/MAPK6 is phosphorylated at Ser-189 and then mediates phosphorylation and activation of MAPKAPK5, which in turn phosphorylates ERK3/MAPK6. May promote entry in the cell cycle. The protein is Mitogen-activated protein kinase 6 (MAPK6) of Pongo abelii (Sumatran orangutan).